The primary structure comprises 278 residues: 4-deoxy-L-threo-5-hexosulose-uronate ketol-isomerase (278 aa).

Residues histidine 196, histidine 198, glutamate 203, and histidine 245 each contribute to the Zn(2+) site.

The protein belongs to the KduI family. It depends on Zn(2+) as a cofactor.

It catalyses the reaction 5-dehydro-4-deoxy-D-glucuronate = 3-deoxy-D-glycero-2,5-hexodiulosonate. Its pathway is glycan metabolism; pectin degradation; 2-dehydro-3-deoxy-D-gluconate from pectin: step 4/5. Catalyzes the isomerization of 5-dehydro-4-deoxy-D-glucuronate to 3-deoxy-D-glycero-2,5-hexodiulosonate. The polypeptide is 4-deoxy-L-threo-5-hexosulose-uronate ketol-isomerase (Shigella flexneri serotype 5b (strain 8401)).